We begin with the raw amino-acid sequence, 399 residues long: Probable endo-xylogalacturonan hydrolase A (399 aa).

The N-terminal stretch at 1-19 is a signal peptide; it reads MTFGKAAFLSFSLFGASWA. PbH1 repeat units lie at residues 177 to 207, 208 to 229, 231 to 251, 260 to 283, and 293 to 314; these read TTNA…DIGE, STYV…AFKP, CNYL…SVGS, VQNV…KTYP, and VTNV…QIQS. Aspartate 222 serves as the catalytic Proton donor. Residue histidine 245 is part of the active site. N-linked (GlcNAc...) asparagine glycosylation is found at asparagine 295 and asparagine 382.

The protein belongs to the glycosyl hydrolase 28 family.

Its subcellular location is the secreted. Functionally, pectinolytic enzyme involved in the degradation of xylogalacturonan (xga), a galacturonan backbone heavily substituted with xylose, and which is one important component of the hairy regions of pectin. Activity requires a galacturonic acid backbone substituted with xylose. The protein is Probable endo-xylogalacturonan hydrolase A (xghA) of Emericella nidulans (strain FGSC A4 / ATCC 38163 / CBS 112.46 / NRRL 194 / M139) (Aspergillus nidulans).